The primary structure comprises 311 residues: Olfactory receptor 1D4 (311 aa).

The Extracellular portion of the chain corresponds to M1 to Q25. The N-linked (GlcNAc...) asparagine glycan is linked to N5. The helical transmembrane segment at I26 to I49 threads the bilayer. Residues S50–T57 are Cytoplasmic-facing. The chain crosses the membrane as a helical span at residues P58–P79. The Extracellular portion of the chain corresponds to K80–Q100. A disulfide bridge links C97 with C189. A helical transmembrane segment spans residues L101–Y120. The Cytoplasmic segment spans residues D121 to L140. Residues C141–L158 traverse the membrane as a helical segment. Residues L159–H196 are Extracellular-facing. The chain crosses the membrane as a helical span at residues T197–R220. Residues I221–T237 are Cytoplasmic-facing. Residues F238 to L260 traverse the membrane as a helical segment. Over Q261–S271 the chain is Extracellular. A helical membrane pass occupies residues V272–L291. The Cytoplasmic portion of the chain corresponds to R292–P311.

Belongs to the G-protein coupled receptor 1 family.

It localises to the cell membrane. Functionally, odorant receptor. The chain is Olfactory receptor 1D4 (OR1D4) from Homo sapiens (Human).